A 65-amino-acid polypeptide reads, in one-letter code: Alpha-toxin Lqq4 (65 aa).

The LCN-type CS-alpha/beta domain maps to 3 to 65; it reads RDAYIADDKN…VPIRIPGKCR (63 aa). The specificity module, loop 1 stretch occupies residues 9–13; the sequence is DDKNC. Disulfide bonds link C13/C64, C17/C37, C23/C47, and C27/C49. Specificity module, loop stretches follow at residues 40-44 and 57-65; these read LGKYG and PIRIPGKCR. Residue R65 is modified to Arginine amide.

It belongs to the long (4 C-C) scorpion toxin superfamily. Sodium channel inhibitor family. Alpha subfamily. Post-translationally, the recombinant toxin which is used for activity tests is not amidated. However, C-terminal amidation does not appear to play an important role in activity, since the non-amidated recombinant toxin and the native toxin (which is amidated) show similar activities on all sodium channels tested. In terms of tissue distribution, expressed by the venom gland.

It is found in the secreted. Alpha toxins bind voltage-independently at site-3 of sodium channels (Nav) and inhibit the inactivation of the activated channels, thereby blocking neuronal transmission. Both native and recombinant (non-amidated) toxins inhibit inactivation of Nav1.2/SCN2A (EC(50)=31.2-36.6 nM), Nav1.6/SCN8A (EC(50)=6.9-8.9 nM), and Nav1.7/SCN9A (EC(50)=182.0-260.1 nM). The sequence is that of Alpha-toxin Lqq4 from Leiurus quinquestriatus quinquestriatus (Egyptian scorpion).